Consider the following 316-residue polypeptide: Ribosomal RNA small subunit methyltransferase H (316 aa).

S-adenosyl-L-methionine-binding positions include 35–37 (SGH), aspartate 55, phenylalanine 84, aspartate 105, and glutamine 112.

This sequence belongs to the methyltransferase superfamily. RsmH family.

Its subcellular location is the cytoplasm. The enzyme catalyses cytidine(1402) in 16S rRNA + S-adenosyl-L-methionine = N(4)-methylcytidine(1402) in 16S rRNA + S-adenosyl-L-homocysteine + H(+). In terms of biological role, specifically methylates the N4 position of cytidine in position 1402 (C1402) of 16S rRNA. This chain is Ribosomal RNA small subunit methyltransferase H, found in Streptococcus pyogenes serotype M4 (strain MGAS10750).